The primary structure comprises 427 residues: Serine hydroxymethyltransferase (427 aa).

Residues L118 and 122 to 124 (GHL) each bind (6S)-5,6,7,8-tetrahydrofolate. K227 carries the N6-(pyridoxal phosphate)lysine modification. Residues E243 and 351–353 (SPF) contribute to the (6S)-5,6,7,8-tetrahydrofolate site.

This sequence belongs to the SHMT family. In terms of assembly, homodimer. The cofactor is pyridoxal 5'-phosphate.

It localises to the cytoplasm. It catalyses the reaction (6R)-5,10-methylene-5,6,7,8-tetrahydrofolate + glycine + H2O = (6S)-5,6,7,8-tetrahydrofolate + L-serine. It participates in one-carbon metabolism; tetrahydrofolate interconversion. Its pathway is amino-acid biosynthesis; glycine biosynthesis; glycine from L-serine: step 1/1. In terms of biological role, catalyzes the reversible interconversion of serine and glycine with tetrahydrofolate (THF) serving as the one-carbon carrier. This reaction serves as the major source of one-carbon groups required for the biosynthesis of purines, thymidylate, methionine, and other important biomolecules. Also exhibits THF-independent aldolase activity toward beta-hydroxyamino acids, producing glycine and aldehydes, via a retro-aldol mechanism. The chain is Serine hydroxymethyltransferase from Thermotoga maritima (strain ATCC 43589 / DSM 3109 / JCM 10099 / NBRC 100826 / MSB8).